The primary structure comprises 215 residues: Variable small protein 2 (215 aa).

Positions 1–18 (MRKRISAIIMTLFMVFMS) are cleaved as a signal peptide. Cys19 carries the N-palmitoyl cysteine lipid modification. Cys19 carries the S-diacylglycerol cysteine lipid modification.

Belongs to the variable small protein (Vsp) family.

The protein localises to the cell outer membrane. Functionally, the Vlp and Vsp proteins are antigenically distinct proteins, only one vlp or vsp gene is transcriptionally active at any one time. Switching between these genes is a mechanism of host immune response evasion. The polypeptide is Variable small protein 2 (Borrelia hermsii).